A 135-amino-acid polypeptide reads, in one-letter code: Galectin-1 (135 aa).

N-acetylalanine is present on alanine 2. Residues 4 to 135 (GLVASNLNLK…DFKIKCVAFE (132 aa)) form the Galectin domain. 3 positions are modified to N6-acetyllysine: lysine 13, lysine 19, and lysine 29. Serine 30 carries the post-translational modification Phosphoserine. A beta-D-galactoside contacts are provided by residues 45 to 49 (HFNPR), histidine 53, asparagine 62, and 69 to 72 (WGTE). Lysine 108 bears the N6-acetyllysine; alternate mark. An N6-succinyllysine; alternate modification is found at lysine 108. At lysine 128 the chain carries N6-acetyllysine.

In terms of assembly, homodimer. Binds LGALS3BP. Interacts with CD2, CD3, CD4, CD6, CD7, CD43, ALCAM and CD45. Interacts with laminin (via poly-N-acetyllactosamine). Interacts with SUSD2. Interacts with cargo receptor TMED10; the interaction mediates the translocation from the cytoplasm into the ERGIC (endoplasmic reticulum-Golgi intermediate compartment) and thereby secretion. Interacts with CD69.

The protein resides in the secreted. It is found in the extracellular space. It localises to the extracellular matrix. Its subcellular location is the cytoplasm. Functionally, lectin that binds beta-galactoside and a wide array of complex carbohydrates. Plays a role in regulating apoptosis, cell proliferation and cell differentiation. Inhibits CD45 protein phosphatase activity and therefore the dephosphorylation of Lyn kinase. Strong inducer of T-cell apoptosis. Plays a negative role in Th17 cell differentiation via activation of the receptor CD69. This Rattus norvegicus (Rat) protein is Galectin-1 (Lgals1).